Reading from the N-terminus, the 128-residue chain is Small ribosomal subunit protein uS10 (128 aa).

The protein belongs to the universal ribosomal protein uS10 family.

This chain is Small ribosomal subunit protein uS10 (RPS20), found in Oryza sativa subsp. japonica (Rice).